Reading from the N-terminus, the 813-residue chain is Valine--tRNA ligase (813 aa).

The 'HIGH' region motif lies at 46 to 56 (PTVSGQLHIGH). A 'KMSKS' region motif is present at residues 536 to 540 (KMSKS). ATP is bound at residue Lys539.

It belongs to the class-I aminoacyl-tRNA synthetase family. ValS type 2 subfamily. As to quaternary structure, monomer.

Its subcellular location is the cytoplasm. It catalyses the reaction tRNA(Val) + L-valine + ATP = L-valyl-tRNA(Val) + AMP + diphosphate. Catalyzes the attachment of valine to tRNA(Val). As ValRS can inadvertently accommodate and process structurally similar amino acids such as threonine, to avoid such errors, it has a 'posttransfer' editing activity that hydrolyzes mischarged Thr-tRNA(Val) in a tRNA-dependent manner. This is Valine--tRNA ligase from Rickettsia canadensis (strain McKiel).